Here is a 728-residue protein sequence, read N- to C-terminus: Phosphoribosylformylglycinamidine synthase subunit PurL (728 aa).

The active site involves His42. Residues Tyr45 and Lys84 each contribute to the ATP site. Glu86 lines the Mg(2+) pocket. Substrate-binding positions include 87–90 (SHNH) and Arg109. His88 functions as the Proton acceptor in the catalytic mechanism. Asp110 is a binding site for Mg(2+). Gln237 lines the substrate pocket. Mg(2+) is bound at residue Asp265. 309 to 311 (ESQ) is a substrate binding site. 2 residues coordinate ATP: Asp491 and Gly528. Asn529 is a Mg(2+) binding site. Ser531 contributes to the substrate binding site.

This sequence belongs to the FGAMS family. As to quaternary structure, monomer. Part of the FGAM synthase complex composed of 1 PurL, 1 PurQ and 2 PurS subunits.

Its subcellular location is the cytoplasm. The catalysed reaction is N(2)-formyl-N(1)-(5-phospho-beta-D-ribosyl)glycinamide + L-glutamine + ATP + H2O = 2-formamido-N(1)-(5-O-phospho-beta-D-ribosyl)acetamidine + L-glutamate + ADP + phosphate + H(+). It participates in purine metabolism; IMP biosynthesis via de novo pathway; 5-amino-1-(5-phospho-D-ribosyl)imidazole from N(2)-formyl-N(1)-(5-phospho-D-ribosyl)glycinamide: step 1/2. Functionally, part of the phosphoribosylformylglycinamidine synthase complex involved in the purines biosynthetic pathway. Catalyzes the ATP-dependent conversion of formylglycinamide ribonucleotide (FGAR) and glutamine to yield formylglycinamidine ribonucleotide (FGAM) and glutamate. The FGAM synthase complex is composed of three subunits. PurQ produces an ammonia molecule by converting glutamine to glutamate. PurL transfers the ammonia molecule to FGAR to form FGAM in an ATP-dependent manner. PurS interacts with PurQ and PurL and is thought to assist in the transfer of the ammonia molecule from PurQ to PurL. The sequence is that of Phosphoribosylformylglycinamidine synthase subunit PurL from Campylobacter jejuni subsp. jejuni serotype O:2 (strain ATCC 700819 / NCTC 11168).